The sequence spans 2359 residues: Voltage-dependent T-type calcium channel subunit alpha-1H (2359 aa).

A disordered region spans residues 1–63 (MTEGTLAADE…PGTECGADLG (63 aa)). At 1-100 (MTEGTLAADE…SWCLRLVCNP (100 aa)) the chain is on the cytoplasmic side. Residues 24–36 (APVRASPASPGAP) are compositionally biased toward low complexity. An I repeat occupies 87–422 (TRPRSWCLRL…LCLVVIATQF (336 aa)). The chain crosses the membrane as a helical span at residues 101 to 119 (WFEHISMLVIMLNCVTLGM). The Extracellular portion of the chain corresponds to 120–141 (FRPCEDVECRSERCSILEAFDD). Asp140 contacts Zn(2+). A helical transmembrane segment spans residues 142–160 (FIFAFFAVEMVIKMVALGL). The Cytoplasmic segment spans residues 161 to 169 (FGQKCYLGD). Residues 170–184 (TWNRLDFFIVMAGMM) form a helical membrane-spanning segment. The Extracellular portion of the chain corresponds to 185-193 (EYSLDGHNV). Residues Asp189 and His191 each coordinate Zn(2+). The N-linked (GlcNAc...) asparagine glycan is linked to Asn192. Residues 194 to 212 (SLSAIRTVRVLRPLRAINR) traverse the membrane as a helical segment. The Cytoplasmic segment spans residues 213-232 (VPSMRILVTLLLDTLPMLGN). The chain crosses the membrane as a helical span at residues 233–253 (VLLLCFFVFFIFGIVGVQLWA). Over 254 to 394 (GLLRNRCFLD…YYVMDAHSFY (141 aa)) the chain is Extracellular. A glycan (N-linked (GlcNAc...) asparagine) is linked at Asn271. A helical membrane pass occupies residues 395–419 (NFIYFILLIIMGSFFMINLCLVVIA). At 420–790 (TQFSETKQRE…GKLRRIVDSK (371 aa)) the chain is on the cytoplasmic side. Disordered stretches follow at residues 490–573 (VDPS…SESV), 620–656 (GTVN…SPRP), and 737–769 (GDCR…ASQP). The span at 503–532 (RRPRRAGRRTASVHHLVYHHHHHHHHHYHF) shows a compositional bias: basic residues. The segment covering 557–566 (PPSPPSPGHG) has biased composition (pro residues). Polar residues predominate over residues 620–631 (GTVNSKGGTSSR). The stretch at 776-1015 (WASFSGKLRR…LLVAILVEGF (240 aa)) is one II repeat. The helical transmembrane segment at 791–811 (YFNRGIMAAILVNTLSMGVEY) threads the bilayer. Topologically, residues 812–824 (HEQPEELTNALEI) are extracellular. Residues 825–846 (SNIVFTSMFALEMLLKLLACGP) form a helical membrane-spanning segment. Over 847–852 (LGYIRN) the chain is Cytoplasmic. Residues 853–871 (PYNIFDGIVVVISVWEIVG) traverse the membrane as a helical segment. Over 872–879 (QANGGLSV) the chain is Extracellular. The helical transmembrane segment at 880–903 (LRTFRLLRVLKLVRFLPALRRQLV) threads the bilayer. Over 904 to 914 (VLMRTMDNVAT) the chain is Cytoplasmic. A helical membrane pass occupies residues 915–935 (FCMLLMLFIFIFSILGMHLFG). The Extracellular portion of the chain corresponds to 936-987 (CKFSLKTDSGDTVPDRKNFDSLLWAIVTVFQILTQEDWNVVLYNGMASTSSW). Residues 988 to 1012 (AALYFVALMTFGNYVLFNLLVAILV) traverse the membrane as a helical segment. The Cytoplasmic segment spans residues 1013-1301 (EGFQAEGDAT…NRLRVSCQKV (289 aa)). A disordered region spans residues 1061-1197 (GHLEGRGSLP…GASPGPRATP (137 aa)). The segment covering 1117–1126 (SLASLRSSPC) has biased composition (polar residues). Over residues 1130–1147 (GPNSAGSSRRSSWNSLGR) the composition is skewed to low complexity. The stretch at 1292–1569 (NRLRVSCQKV…MFVGVVVENF (278 aa)) is one III repeat. Residues 1302-1324 (IAHKMFDHVVLVFIFLNCITIAL) traverse the membrane as a helical segment. Over 1325–1342 (ERPDIDPGSTERAFLSVS) the chain is Extracellular. The chain crosses the membrane as a helical span at residues 1343–1363 (NYIFTAIFVVEMMVKVVALGL). At 1364–1373 (LWGEHAYLQS) the chain is on the cytoplasmic side. The helical transmembrane segment at 1374-1393 (SWNVLDGLLVLVSLVDIIVA) threads the bilayer. Residues 1394–1407 (MASAGGAKILGVLR) lie on the Extracellular side of the membrane. The chain crosses the membrane as a helical span at residues 1408 to 1429 (VLRLLRTLRPLRVISRAPGLKL). The Cytoplasmic segment spans residues 1430–1439 (VVETLISSLR). Residues 1440–1463 (PIGNIVLICCAFFIIFGILGVQLF) traverse the membrane as a helical segment. The Extracellular portion of the chain corresponds to 1464 to 1540 (KGKFYYCEGT…DQQPVQNHNP (77 aa)). Asn1477 carries N-linked (GlcNAc...) asparagine glycosylation. The chain crosses the membrane as a helical span at residues 1541 to 1566 (WMLLYFISFLLIVSFFVLNMFVGVVV). Over 1567-1621 (ENFHKCRQHQEAEEARRREEKRLRRLERRRRKAQRRPYYADYSHTRRSIHSLCTS) the chain is Cytoplasmic. One copy of the IV repeat lies at 1607–1868 (DYSHTRRSIH…VVVAVLMKHL (262 aa)). The helical transmembrane segment at 1622–1642 (HYLDLFITFIICLNVITMSME) threads the bilayer. At 1643-1656 (HYNQPKSLDEALKY) the chain is on the extracellular side. A helical transmembrane segment spans residues 1657–1678 (CNYVFTIVFVFEAALKLVAFGF). Residues 1679-1685 (RRFFKDR) lie on the Cytoplasmic side of the membrane. Residues 1686–1704 (WNQLDLAIVLLSIMGIALE) form a helical membrane-spanning segment. Over 1705-1718 (EIEMNAALPINPTI) the chain is Extracellular. Residues 1719 to 1742 (IRIMRVLRIARVLKLLKMATGMRA) form a helical membrane-spanning segment. Topologically, residues 1743–1756 (LLDTVVQALPQVGN) are cytoplasmic. Residues 1757-1777 (LGLLFMLLFFIYAALGVELFG) form a helical membrane-spanning segment. The Extracellular segment spans residues 1778 to 1840 (RLECSEDNPC…KHCLSYLPAL (63 aa)). A helical transmembrane segment spans residues 1841 to 1868 (SPVYFVTFMLVAQFVLVNVVVAVLMKHL). Over 1869–2359 (EESNKEARED…APDDSGDEPV (491 aa)) the chain is Cytoplasmic. Residues 1891–1911 (QGSTAQPPPTAQESQGTQPDT) are compositionally biased toward polar residues. Disordered stretches follow at residues 1891–1913 (QGST…DTPN), 1974–2003 (SFQV…PRSL), 2016–2258 (HSES…GERW), and 2335–2359 (PQTP…DEPV). A compositionally biased stretch (basic and acidic residues) spans 2016 to 2026 (HSESLEGKVDD). Over residues 2086–2096 (DEAEAADPADE) the composition is skewed to acidic residues. Residues 2166–2181 (GESHLESGEVRGRASE) are compositionally biased toward basic and acidic residues.

This sequence belongs to the calcium channel alpha-1 subunit (TC 1.A.1.11) family. CACNA1H subfamily. As to quaternary structure, interacts (via N-terminal cytoplasmic domain) with STAC. In terms of processing, in response to raising of intracellular calcium, the T-type channels are activated by CaM-kinase II. In terms of tissue distribution, expressed in brain.

The protein resides in the cell membrane. It carries out the reaction Ca(2+)(in) = Ca(2+)(out). Its function is as follows. Voltage-sensitive calcium channel that gives rise to T-type calcium currents. T-type calcium channels belong to the 'low-voltage activated (LVA)' group. A particularity of this type of channel is an opening at quite negative potentials, and a voltage-dependent inactivation. T-type channels serve pacemaking functions in both central neurons and cardiac nodal cells and support calcium signaling in secretory cells and vascular smooth muscle. They may also be involved in the modulation of firing patterns of neurons. In the adrenal zona glomerulosa, participates in the signaling pathway leading to aldosterone production in response to either AGT/angiotensin II, or hyperkalemia. The sequence is that of Voltage-dependent T-type calcium channel subunit alpha-1H (Cacna1h) from Rattus norvegicus (Rat).